A 904-amino-acid chain; its full sequence is Protein translocase subunit SecA (904 aa).

ATP is bound by residues Gln-89, 107–111 (GEGKT), and Asp-502. Zn(2+)-binding residues include Cys-888, Cys-890, Cys-899, and His-900.

It belongs to the SecA family. In terms of assembly, monomer and homodimer. Part of the essential Sec protein translocation apparatus which comprises SecA, SecYEG and auxiliary proteins SecDF-YajC and YidC. It depends on Zn(2+) as a cofactor.

The protein localises to the cell inner membrane. It localises to the cytoplasm. The enzyme catalyses ATP + H2O + cellular proteinSide 1 = ADP + phosphate + cellular proteinSide 2.. Functionally, part of the Sec protein translocase complex. Interacts with the SecYEG preprotein conducting channel. Has a central role in coupling the hydrolysis of ATP to the transfer of proteins into and across the cell membrane, serving both as a receptor for the preprotein-SecB complex and as an ATP-driven molecular motor driving the stepwise translocation of polypeptide chains across the membrane. This Roseobacter denitrificans (strain ATCC 33942 / OCh 114) (Erythrobacter sp. (strain OCh 114)) protein is Protein translocase subunit SecA.